A 529-amino-acid polypeptide reads, in one-letter code: Nucleolar protein 58 (529 aa).

At T34 the chain carries Phosphothreonine. At S109 the chain carries Phosphoserine. Residues A155 to D400 are sufficient for interaction with NOPCHAP1. K157 participates in a covalent cross-link: Glycyl lysine isopeptide (Lys-Gly) (interchain with G-Cter in SUMO2). Residues I282–D400 form the Nop domain. 2 positions are modified to phosphoserine: S304 and S351. Residues K353, K411, K415, K422, K426, K441, K444, and K465 each participate in a glycyl lysine isopeptide (Lys-Gly) (interchain with G-Cter in SUMO2) cross-link. Residues T409 to D529 form a disordered region. A compositionally biased stretch (basic and acidic residues) spans A414–T427. A Glycyl lysine isopeptide (Lys-Gly) (interchain with G-Cter in SUMO); alternate cross-link involves residue K467. K467 is covalently cross-linked (Glycyl lysine isopeptide (Lys-Gly) (interchain with G-Cter in SUMO1); alternate). A Glycyl lysine isopeptide (Lys-Gly) (interchain with G-Cter in SUMO2); alternate cross-link involves residue K467. Over residues E469–E481 the composition is skewed to acidic residues. S483 bears the Phosphoserine mark. K485 participates in a covalent cross-link: Glycyl lysine isopeptide (Lys-Gly) (interchain with G-Cter in SUMO2). The segment covering K485 to H495 has biased composition (basic residues). Residue K497 forms a Glycyl lysine isopeptide (Lys-Gly) (interchain with G-Cter in SUMO); alternate linkage. K497 participates in a covalent cross-link: Glycyl lysine isopeptide (Lys-Gly) (interchain with G-Cter in SUMO2); alternate. A phosphoserine mark is found at S502 and S514. Over residues K517–D529 the composition is skewed to basic residues.

Belongs to the NOP5/NOP56 family. In terms of assembly, core component of box C/D small nucleolar ribonucleoprotein (snoRNP) particles; the core proteins SNU13, NOP56, NOP58 and FBL or FBLL1 assemble stepwise onto the snoRNA. Interacts with NOLC1/Nopp140. Interacts with NOPCHAP1, NUFIP1, RUVBL1 and RUVBL2; NOPCHAP1 bridges the association of NOP58 with RUVBL1:RUVBL2 and NUFIP1. Interacts with PIH1D1. Part of the small subunit (SSU) processome, composed of more than 70 proteins and the RNA chaperone small nucleolar RNA (snoRNA) U3. Post-translationally, sumoylation is essential for high-affinity binding to snoRNAs. As to expression, ubiquitous.

It is found in the nucleus. Its subcellular location is the nucleolus. It localises to the nucleoplasm. Required for the biogenesis of box C/D snoRNAs such as U3, U8 and U14 snoRNAs. Part of the small subunit (SSU) processome, first precursor of the small eukaryotic ribosomal subunit. During the assembly of the SSU processome in the nucleolus, many ribosome biogenesis factors, an RNA chaperone and ribosomal proteins associate with the nascent pre-rRNA and work in concert to generate RNA folding, modifications, rearrangements and cleavage as well as targeted degradation of pre-ribosomal RNA by the RNA exosome. Core component of box C/D small nucleolar ribonucleoprotein (snoRNP) complexes that function in methylation of multiple sites on ribosomal RNAs (rRNAs) and messenger RNAs (mRNAs). This Homo sapiens (Human) protein is Nucleolar protein 58.